Reading from the N-terminus, the 807-residue chain is Glycerol-3-phosphate acyltransferase (807 aa).

An HXXXXD motif motif is present at residues 308–313 (CHRSHM).

The protein belongs to the GPAT/DAPAT family.

Its subcellular location is the cell inner membrane. It carries out the reaction sn-glycerol 3-phosphate + an acyl-CoA = a 1-acyl-sn-glycero-3-phosphate + CoA. The protein operates within phospholipid metabolism; CDP-diacylglycerol biosynthesis; CDP-diacylglycerol from sn-glycerol 3-phosphate: step 1/3. This chain is Glycerol-3-phosphate acyltransferase, found in Shewanella sp. (strain ANA-3).